The following is a 186-amino-acid chain: Shikimate kinase (186 aa).

Residue G15–T20 coordinates ATP. T19 is a Mg(2+) binding site. Residues D37, R61, and G83 each coordinate substrate. Residue R121 coordinates ATP. Position 140 (R140) interacts with substrate.

Belongs to the shikimate kinase family. Monomer. Mg(2+) serves as cofactor.

The protein resides in the cytoplasm. It catalyses the reaction shikimate + ATP = 3-phosphoshikimate + ADP + H(+). It participates in metabolic intermediate biosynthesis; chorismate biosynthesis; chorismate from D-erythrose 4-phosphate and phosphoenolpyruvate: step 5/7. Catalyzes the specific phosphorylation of the 3-hydroxyl group of shikimic acid using ATP as a cosubstrate. This is Shikimate kinase from Psychrobacter arcticus (strain DSM 17307 / VKM B-2377 / 273-4).